We begin with the raw amino-acid sequence, 133 residues long: S-protein homolog 21 (133 aa).

Residues 1–21 (MKNLSIFLFVVGLCMISDVYG) form the signal peptide.

It belongs to the plant self-incompatibility (S1) protein family.

The protein localises to the secreted. The chain is S-protein homolog 21 from Arabidopsis thaliana (Mouse-ear cress).